We begin with the raw amino-acid sequence, 459 residues long: Ceramide glucosyltransferase 3 (459 aa).

A helical membrane pass occupies residues 77–97 (LIAIVGFVFVFCLYLIHIIAL). Aspartate 156 is a short sequence motif (D1). A short sequence motif (D2) is located at residue aspartate 208. Residue aspartate 302 is a short sequence motif, D3. Aspartate 302 serves as the catalytic Proton acceptor. Residues 338–342 (RICRW) carry the (Q/R)XXRW motif. The next 2 membrane-spanning stretches (helical) occupy residues 367–387 (LIMAFSLNHLVGLNIMPILIL) and 415–435 (FMLIWLLRELTAPFVFIKALL).

It belongs to the glycosyltransferase 2 family. As to expression, expressed in pharyngeal intestinal valve, intestinal rectal valve and hypodermis.

The protein localises to the membrane. The catalysed reaction is an N-acylsphing-4-enine + UDP-alpha-D-glucose = a beta-D-glucosyl-(1&lt;-&gt;1')-N-acylsphing-4-enine + UDP + H(+). The enzyme catalyses an N-acyl-15-methylhexadecasphing-4-enine + UDP-alpha-D-glucose = an N-acyl-1-beta-D-glucosyl-15-methylhexadecasphing-4-enine + UDP + H(+). It participates in lipid metabolism; sphingolipid metabolism. Functionally, catalyzes the first glycosylation step in glycosphingolipid biosynthesis, the transfer of glucose to ceramide to produce glucosylceramides (GlcCer). GlcCer are known to contribute to the physical properties and physiological functions of membranes and may regulate signal transduction. Seems to be the major active form in the nematode. Only branched-chain sphingoid bases like 15-methylhexadecasphing-4-enine are used for generating complex sphingolipids in Caenorhabditis elegans. Together with cgt-1, plays a role in the trafficking of proteins such as mig-14 to the cell membrane in intestinal cells. In Caenorhabditis elegans, this protein is Ceramide glucosyltransferase 3.